Reading from the N-terminus, the 338-residue chain is MKRMIALDGAQGEGGGQILRSALSLSMITGQPFTITSIRAGRAKPGLLRQHLTAVKAAAEICRATVEGAELGSQRLVFRPGTVRGGEYRFAIGSAGSCTLVLQTVLPALWFADGPSRVEVSGGTDNPSAPPADFIRRVLEPLLAKIGIHQQTTLLRHGFYPAGGGVVATEVSPVASFNTLQLGERGNIVQMCGEVLLAGVPRHVAEREIATLAGSFSLHEQNIHNLPRDQGPGNTVSLEVESENITERFFVVGEKRVSAEVVAAQLVKEVKRYLASPAAVGEYLADQLVLPMALAGAGEFKVAHPSCHLLTNIAVVERFLPVRFGLIETDGVTRVSIE.

Residues Gln-103 and 283–287 (YLADQ) contribute to the ATP site. The Tele-AMP-histidine intermediate role is filled by His-308.

The protein belongs to the RNA 3'-terminal cyclase family. Type 1 subfamily.

Its subcellular location is the cytoplasm. It catalyses the reaction a 3'-end 3'-phospho-ribonucleotide-RNA + ATP = a 3'-end 2',3'-cyclophospho-ribonucleotide-RNA + AMP + diphosphate. Catalyzes the conversion of 3'-phosphate to a 2',3'-cyclic phosphodiester at the end of RNA. The mechanism of action of the enzyme occurs in 3 steps: (A) adenylation of the enzyme by ATP; (B) transfer of adenylate to an RNA-N3'P to produce RNA-N3'PP5'A; (C) and attack of the adjacent 2'-hydroxyl on the 3'-phosphorus in the diester linkage to produce the cyclic end product. The biological role of this enzyme is unknown but it is likely to function in some aspects of cellular RNA processing. The sequence is that of RNA 3'-terminal phosphate cyclase from Escherichia coli O139:H28 (strain E24377A / ETEC).